Reading from the N-terminus, the 100-residue chain is ATP-dependent Clp protease adapter protein ClpS (100 aa).

This sequence belongs to the ClpS family. Binds to the N-terminal domain of the chaperone ClpA.

In terms of biological role, involved in the modulation of the specificity of the ClpAP-mediated ATP-dependent protein degradation. The chain is ATP-dependent Clp protease adapter protein ClpS from Nitratidesulfovibrio vulgaris (strain DSM 19637 / Miyazaki F) (Desulfovibrio vulgaris).